We begin with the raw amino-acid sequence, 664 residues long: Alkaline/neutral invertase C, mitochondrial (664 aa).

3 positions are modified to phosphoserine: Ser-41, Ser-125, and Ser-657.

It belongs to the glycosyl hydrolase 100 family. Expressed in seedlings, roots and flowers.

It localises to the mitochondrion. The enzyme catalyses Hydrolysis of terminal non-reducing beta-D-fructofuranoside residues in beta-D-fructofuranosides.. Functionally, mitochondrial invertase that cleaves sucrose into glucose and fructose and is involved in the regulation of aerial tissue development and floral transition. May be modulating hormone balance in relation to the radicle emergence. This Arabidopsis thaliana (Mouse-ear cress) protein is Alkaline/neutral invertase C, mitochondrial.